We begin with the raw amino-acid sequence, 320 residues long: tRNA U34 carboxymethyltransferase (320 aa).

Residues lysine 89, tryptophan 103, lysine 108, glycine 127, 177-178 (LE), methionine 193, tyrosine 197, and arginine 312 each bind carboxy-S-adenosyl-L-methionine.

This sequence belongs to the class I-like SAM-binding methyltransferase superfamily. CmoB family. In terms of assembly, homotetramer.

It carries out the reaction carboxy-S-adenosyl-L-methionine + 5-hydroxyuridine(34) in tRNA = 5-carboxymethoxyuridine(34) in tRNA + S-adenosyl-L-homocysteine + H(+). Functionally, catalyzes carboxymethyl transfer from carboxy-S-adenosyl-L-methionine (Cx-SAM) to 5-hydroxyuridine (ho5U) to form 5-carboxymethoxyuridine (cmo5U) at position 34 in tRNAs. In Stutzerimonas stutzeri (strain A1501) (Pseudomonas stutzeri), this protein is tRNA U34 carboxymethyltransferase.